The following is a 324-amino-acid chain: Protein SRC2 homolog (324 aa).

Residues 1–111 (MECRSLDLTI…LDQNKGDEEK (111 aa)) enclose the C2 domain. Residues 1–279 (MECRSLDLTI…KPQKPKKHGK (279 aa)) lie on the Cytoplasmic side of the membrane. The segment at 141–281 (GSSSGPHAPV…QKPKKHGKAG (141 aa)) is disordered. Composition is skewed to low complexity over residues 166–175 (YPPGHGAPSA) and 246–269 (PYGY…QAHG). Positions 270-279 (KPQKPKKHGK) are enriched in basic residues. The helical; Signal-anchor transmembrane segment at 280-300 (AGAGMGLGLGLGAGLLGGLLV) threads the bilayer. The Lumenal segment spans residues 301–324 (GEAVSDIADMGDMGDMGDMGGFDF).

Interacts with RBOHF (via N-terminus).

It localises to the endoplasmic reticulum membrane. It is found in the protein storage vacuole membrane. The protein localises to the cell membrane. Its function is as follows. May act as an activator of the calcium-dependent activation of RBOHF that mediates reactive oxygen species (ROS) production and may play a role in cold responses. This chain is Protein SRC2 homolog, found in Arabidopsis thaliana (Mouse-ear cress).